Reading from the N-terminus, the 366-residue chain is Ribosomal RNA large subunit methyltransferase M (366 aa).

Residues Ser-188, 221–224 (CPGG), Asp-240, Asp-260, and Asp-277 contribute to the S-adenosyl-L-methionine site. The active-site Proton acceptor is the Lys-306.

Belongs to the class I-like SAM-binding methyltransferase superfamily. RNA methyltransferase RlmE family. RlmM subfamily. As to quaternary structure, monomer.

It localises to the cytoplasm. The catalysed reaction is cytidine(2498) in 23S rRNA + S-adenosyl-L-methionine = 2'-O-methylcytidine(2498) in 23S rRNA + S-adenosyl-L-homocysteine + H(+). In terms of biological role, catalyzes the 2'-O-methylation at nucleotide C2498 in 23S rRNA. In Dickeya chrysanthemi (strain Ech1591) (Dickeya zeae (strain Ech1591)), this protein is Ribosomal RNA large subunit methyltransferase M.